The sequence spans 230 residues: 2,3-bisphosphoglycerate-dependent phosphoglycerate mutase (230 aa).

Residues 8 to 15, 21 to 22, arginine 60, 87 to 90, lysine 98, 114 to 115, and 183 to 184 each bind substrate; these read RHGESEWN, TG, ERHY, RR, and GN. The active-site Tele-phosphohistidine intermediate is the histidine 9. Glutamate 87 serves as the catalytic Proton donor/acceptor.

It belongs to the phosphoglycerate mutase family. BPG-dependent PGAM subfamily.

The catalysed reaction is (2R)-2-phosphoglycerate = (2R)-3-phosphoglycerate. It participates in carbohydrate degradation; glycolysis; pyruvate from D-glyceraldehyde 3-phosphate: step 3/5. Its function is as follows. Catalyzes the interconversion of 2-phosphoglycerate and 3-phosphoglycerate. The polypeptide is 2,3-bisphosphoglycerate-dependent phosphoglycerate mutase (Streptococcus sanguinis (strain SK36)).